A 59-amino-acid polypeptide reads, in one-letter code: UPF0434 protein PBPRA2383 (59 aa).

It belongs to the UPF0434 family.

This is UPF0434 protein PBPRA2383 from Photobacterium profundum (strain SS9).